We begin with the raw amino-acid sequence, 246 residues long: Adenosylcobinamide-GDP ribazoletransferase (246 aa).

The next 7 helical transmembrane spans lie at 30–50, 51–71, 105–125, 131–151, 167–189, 193–210, and 226–246; these read VNWY…VHQA, GLVL…WVYV, VGAM…GAVA, GWGS…LLSI, ISSG…AGWY, LQVM…LWFS, and GAVI…SWWL.

The protein belongs to the CobS family. Requires Mg(2+) as cofactor.

The protein resides in the cell membrane. It carries out the reaction alpha-ribazole + adenosylcob(III)inamide-GDP = adenosylcob(III)alamin + GMP + H(+). It catalyses the reaction alpha-ribazole 5'-phosphate + adenosylcob(III)inamide-GDP = adenosylcob(III)alamin 5'-phosphate + GMP + H(+). It functions in the pathway cofactor biosynthesis; adenosylcobalamin biosynthesis; adenosylcobalamin from cob(II)yrinate a,c-diamide: step 7/7. Functionally, joins adenosylcobinamide-GDP and alpha-ribazole to generate adenosylcobalamin (Ado-cobalamin). Also synthesizes adenosylcobalamin 5'-phosphate from adenosylcobinamide-GDP and alpha-ribazole 5'-phosphate. This Brevibacillus brevis (strain 47 / JCM 6285 / NBRC 100599) protein is Adenosylcobinamide-GDP ribazoletransferase.